The primary structure comprises 377 residues: Succinyl-diaminopimelate desuccinylase (377 aa).

His66 is a binding site for Zn(2+). Asp68 is a catalytic residue. Asp99 provides a ligand contact to Zn(2+). Catalysis depends on Glu133, which acts as the Proton acceptor. Zn(2+)-binding residues include Glu134, Glu162, and His348.

This sequence belongs to the peptidase M20A family. DapE subfamily. As to quaternary structure, homodimer. Requires Zn(2+) as cofactor. It depends on Co(2+) as a cofactor.

It carries out the reaction N-succinyl-(2S,6S)-2,6-diaminopimelate + H2O = (2S,6S)-2,6-diaminopimelate + succinate. The protein operates within amino-acid biosynthesis; L-lysine biosynthesis via DAP pathway; LL-2,6-diaminopimelate from (S)-tetrahydrodipicolinate (succinylase route): step 3/3. In terms of biological role, catalyzes the hydrolysis of N-succinyl-L,L-diaminopimelic acid (SDAP), forming succinate and LL-2,6-diaminopimelate (DAP), an intermediate involved in the bacterial biosynthesis of lysine and meso-diaminopimelic acid, an essential component of bacterial cell walls. The protein is Succinyl-diaminopimelate desuccinylase of Histophilus somni (strain 129Pt) (Haemophilus somnus).